The chain runs to 115 residues: Non-specific lipid-transfer protein Cor a 8.0101 (115 aa).

The N-terminal stretch at 1 to 23 (MGSLKLVCAVLLCMMVAAPVARA) is a signal peptide. Intrachain disulfides connect Cys27–Cys74, Cys37–Cys51, Cys52–Cys97, and Cys72–Cys111.

The protein belongs to the plant LTP family. In terms of assembly, monomer. As to expression, expressed in seed (at protein level). Expressed in seed.

Plant non-specific lipid-transfer proteins transfer phospholipids as well as galactolipids across membranes. May play a role in wax or cutin deposition in the cell walls of expanding epidermal cells and certain secretory tissues. The protein is Non-specific lipid-transfer protein Cor a 8.0101 of Corylus avellana (European hazel).